We begin with the raw amino-acid sequence, 606 residues long: Peptide-N(4)-(N-acetyl-beta-glucosaminyl)asparagine amidase (606 aa).

A Thioredoxin domain is found at 2–108; it reads PVTEVGSLPE…IAEKIRQHYS (107 aa). Residues C191, C194, C225, and C228 each contribute to the Zn(2+) site. C251 functions as the Nucleophile in the catalytic mechanism. Residues H278 and D295 contribute to the active site. Positions 404–606 constitute a PAW domain; the sequence is DLGGRITGSE…SFSVKIWMKN (203 aa).

It belongs to the transglutaminase-like superfamily. PNGase family. The cofactor is Zn(2+).

It localises to the cytoplasm. The protein resides in the endoplasmic reticulum. It carries out the reaction Hydrolysis of an N(4)-(acetyl-beta-D-glucosaminyl)asparagine residue in which the glucosamine residue may be further glycosylated, to yield a (substituted) N-acetyl-beta-D-glucosaminylamine and a peptide containing an aspartate residue.. Its activity is regulated as follows. Inhibited by Zn(2+) and z-VAD-fmk (caspase inhibitor) but unaffected by EDTA. In terms of biological role, specifically deglycosylates the denatured form of N-linked glycoproteins in the cytoplasm and assists their proteasome-mediated degradation. Cleaves the beta-aspartyl-glucosamine (GlcNAc) of the glycan and the amide side chain of Asn, converting Asn to Asp. Prefers proteins containing high-mannose over those bearing complex type oligosaccharides. Can recognize misfolded proteins in the endoplasmic reticulum that are exported to the cytosol to be destroyed and deglycosylate them, while it has no activity toward native proteins. Deglycosylation is a prerequisite for subsequent proteasome-mediated degradation of some, but not all, misfolded glycoproteins. Also displays oxidoreductase (thioredoxin) activity. Involved in regulating the expression of proteasomal subunits such as rpt-3 in order to confer resistance to proteasomal dysfunction. This Caenorhabditis elegans protein is Peptide-N(4)-(N-acetyl-beta-glucosaminyl)asparagine amidase (png-1).